An 83-amino-acid polypeptide reads, in one-letter code: Exodeoxyribonuclease 7 small subunit (83 aa).

Belongs to the XseB family. In terms of assembly, heterooligomer composed of large and small subunits.

The protein localises to the cytoplasm. The enzyme catalyses Exonucleolytic cleavage in either 5'- to 3'- or 3'- to 5'-direction to yield nucleoside 5'-phosphates.. Its function is as follows. Bidirectionally degrades single-stranded DNA into large acid-insoluble oligonucleotides, which are then degraded further into small acid-soluble oligonucleotides. This Moorella thermoacetica (strain ATCC 39073 / JCM 9320) protein is Exodeoxyribonuclease 7 small subunit.